The following is a 259-amino-acid chain: Insulin-like growth factor-binding protein 1 (259 aa).

A signal peptide spans 1–25; the sequence is MSEVPVARVWLVLLLLTVQVGVTAG. The IGFBP N-terminal domain maps to 26-107; the sequence is APWQCAPCSA…TRGQGACVQE (82 aa). Intrachain disulfides connect C30–C57, C33–C59, C41–C60, C48–C63, C71–C84, and C78–C104. At S45 the chain carries Phosphoserine; by FAM20C. Residues S120, S123, S126, and S144 each carry the phosphoserine modification. The residue at position 156 (S156) is a Phosphoserine; by FAM20C. Phosphothreonine; by FAM20C is present on T157. At Y158 the chain carries Phosphotyrosine. The 79-residue stretch at 173-251 folds into the Thyroglobulin type-1 domain; that stretch reads KEPCRIELYR…SPEIRGDPNC (79 aa). 3 disulfides stabilise this stretch: C176–C206, C217–C228, and C230–C251. At T193 the chain carries Phosphothreonine; by FAM20C. S194 and S199 each carry phosphoserine; by FAM20C. S242 is modified (phosphoserine; by FAM20C). A Cell attachment site motif is present at residues 246–248; sequence RGD.

In terms of assembly, binds equally well IGF1 and IGF2. Interacts with integrin ITGA5:ITGB1. Interacts with VHL; this interaction inhibits HIF1A degradation. In terms of processing, phosphorylated; probably by casein kinase II. Phosphorylation alters the affinity of the protein for IGFs. In amniotic fluid, the unmodified protein is the most abundant form, while mono-, bi-, tri- and tetraphosphorylated forms are present in decreasing amounts. The phosphorylation state may influence the propensity to proteolysis.

It is found in the secreted. In terms of biological role, multifunctional protein that plays a critical role in regulating the availability of IGFs such as IGF1 and IGF2 to their receptors and thereby regulates IGF-mediated cellular processes including cell migration, proliferation, differentiation or apoptosis in a cell-type specific manner. Also plays a positive role in cell migration by interacting with integrin ITGA5:ITGB1 through its RGD motif. Mechanistically, binding to integrins leads to activation of focal adhesion kinase/PTK2 and stimulation of the mitogen-activated protein kinase (MAPK) pathway. Regulates cardiomyocyte apoptosis by suppressing HIF-1alpha/HIF1A ubiquitination and subsequent degradation. The chain is Insulin-like growth factor-binding protein 1 (IGFBP1) from Homo sapiens (Human).